A 604-amino-acid polypeptide reads, in one-letter code: UvrABC system protein C (604 aa).

The 80-residue stretch at 10 to 89 folds into the GIY-YIG domain; that stretch reads ELPGVYLMKD…VKKNRPHYNI (80 aa). Residues 199 to 234 form the UVR domain; that stretch reads SGTIKELQEKMNIHAIAQEYESAAVIRDQIDALKSL.

It belongs to the UvrC family. As to quaternary structure, interacts with UvrB in an incision complex.

The protein resides in the cytoplasm. Its function is as follows. The UvrABC repair system catalyzes the recognition and processing of DNA lesions. UvrC both incises the 5' and 3' sides of the lesion. The N-terminal half is responsible for the 3' incision and the C-terminal half is responsible for the 5' incision. The protein is UvrABC system protein C of Methanococcoides burtonii (strain DSM 6242 / NBRC 107633 / OCM 468 / ACE-M).